Here is a 259-residue protein sequence, read N- to C-terminus: GTP-binding protein RHO4 (259 aa).

59-66 (GDGATGKT) is a GTP binding site. Positions 81 to 89 (YVPTIFENY) match the Effector region motif. GTP-binding positions include 107 to 111 (DTAGQ) and 165 to 168 (LKSD). The residue at position 256 (C256) is a Cysteine methyl ester. Residue C256 is the site of S-geranylgeranyl cysteine attachment. The propeptide at 257-259 (VVL) is removed in mature form.

Belongs to the small GTPase superfamily. Rho family.

Its subcellular location is the cell membrane. In Eremothecium gossypii (strain ATCC 10895 / CBS 109.51 / FGSC 9923 / NRRL Y-1056) (Yeast), this protein is GTP-binding protein RHO4 (RHO4).